The sequence spans 161 residues: Xanthine-guanine phosphoribosyltransferase (161 aa).

Residues 41-42 (RG) and 95-103 (DDLVDTGNT) each bind 5-phospho-alpha-D-ribose 1-diphosphate. Asp96 is a binding site for Mg(2+). Residues Asp99 and Ile142 each contribute to the guanine site. Xanthine-binding residues include Asp99 and Ile142. Residues 99 to 103 (DTGNT) and 141 to 142 (WI) contribute to the GMP site.

Belongs to the purine/pyrimidine phosphoribosyltransferase family. XGPT subfamily. In terms of assembly, homotetramer. The cofactor is Mg(2+).

The protein resides in the cell inner membrane. It catalyses the reaction GMP + diphosphate = guanine + 5-phospho-alpha-D-ribose 1-diphosphate. The catalysed reaction is XMP + diphosphate = xanthine + 5-phospho-alpha-D-ribose 1-diphosphate. It carries out the reaction IMP + diphosphate = hypoxanthine + 5-phospho-alpha-D-ribose 1-diphosphate. The protein operates within purine metabolism; GMP biosynthesis via salvage pathway; GMP from guanine: step 1/1. It functions in the pathway purine metabolism; XMP biosynthesis via salvage pathway; XMP from xanthine: step 1/1. Purine salvage pathway enzyme that catalyzes the transfer of the ribosyl-5-phosphate group from 5-phospho-alpha-D-ribose 1-diphosphate (PRPP) to the N9 position of the 6-oxopurines guanine and xanthine to form the corresponding ribonucleotides GMP (guanosine 5'-monophosphate) and XMP (xanthosine 5'-monophosphate), with the release of PPi. To a lesser extent, also acts on hypoxanthine. This Idiomarina loihiensis (strain ATCC BAA-735 / DSM 15497 / L2-TR) protein is Xanthine-guanine phosphoribosyltransferase.